Reading from the N-terminus, the 36-residue chain is Light-harvesting protein B-1015 gamma chain (36 aa).

Its function is as follows. One of the components of the bacteriochlorophyll-protein complex in the chromatophore membrane. This Blastochloris viridis (Rhodopseudomonas viridis) protein is Light-harvesting protein B-1015 gamma chain.